The primary structure comprises 218 residues: MGQKINPLGFRLGATQSHLSLWFAQPKSYSMGLQEDEKIRECIKNYVQKNPRLSSGFEGIARIEIKKRIDLIQVIIYIGFPNLFIEGRTQGIKELQMSVQKRLNSVNQRLNIAIARISKPYGQPNILAEYIALQLKNRVSFRKAMKKAIELTEQADTKGIQIQIAGRIDGKEIARVEWIREGRVPLQTIRAKIDHCFHKVQTIYGVLGIKIWIFVDEE.

The KH type-2 domain occupies 43 to 118 (IKNYVQKNPR…RLNIAIARIS (76 aa)).

It belongs to the universal ribosomal protein uS3 family. In terms of assembly, part of the 30S ribosomal subunit.

Its subcellular location is the plastid. The protein localises to the chloroplast. The sequence is that of Small ribosomal subunit protein uS3c (rps3) from Acorus calamus (Sweet flag).